The sequence spans 211 residues: RING finger protein 222 (211 aa).

An RING-type zinc finger spans residues 14–65 (CPVCYEKFRDLDGASRTLSCGHVFCHDCLVKYLLSTRVDGQVQRTIVCPICR). The helical transmembrane segment at 187 to 207 (LITLIAVVAVVAAILPWVLLV) threads the bilayer.

It is found in the membrane. The protein is RING finger protein 222 (Rnf222) of Mus musculus (Mouse).